We begin with the raw amino-acid sequence, 203 residues long: Large ribosomal subunit protein uL3 (203 aa).

It belongs to the universal ribosomal protein uL3 family. As to quaternary structure, part of the 50S ribosomal subunit. Forms a cluster with proteins L14 and L19.

Functionally, one of the primary rRNA binding proteins, it binds directly near the 3'-end of the 23S rRNA, where it nucleates assembly of the 50S subunit. This chain is Large ribosomal subunit protein uL3, found in Christiangramia forsetii (strain DSM 17595 / CGMCC 1.15422 / KT0803) (Gramella forsetii).